Reading from the N-terminus, the 1105-residue chain is Serine/threonine-protein kinase 4 homolog B (1105 aa).

One can recognise a Protein kinase domain in the interval 23–274; that stretch reads FDLIECLGRG…AKDLLKHSFF (252 aa). ATP is bound by residues 29–37 and K52; that span reads LGRGSFGSV. The active-site Proton acceptor is the D142. Disordered regions lie at residues 348-396, 411-482, and 495-541; these read STQI…TKNN, SSSA…RQPA, and PSFG…SLPL. Composition is skewed to low complexity over residues 358-396 and 411-437; these read QAQQ…TKNN and SSSA…TTTN. Residues 438–458 are compositionally biased toward polar residues; that stretch reads DYHTGNGRTSSSSPQFGLQHQ. Low complexity-rich tracts occupy residues 459-473 and 513-541; these read NSSN…TVPS and PIGS…SLPL. A calpain-like cysteine protease-like region spans residues 516 to 1105; it reads SPITKRPTPT…SEFDLDFYNN (590 aa). Domain III stretches follow at residues 641–668, 791–830, 836–972, and 1076–1103; these read EVSA…EGSF, VHTQ…QGSI, SEQI…NVIQ, and VVIP…LDFY.

This sequence in the N-terminal section; belongs to the protein kinase superfamily. STE Ser/Thr protein kinase family. STE20 subfamily. It in the C-terminal section; belongs to the peptidase C2 family. Mn(2+) serves as cofactor.

It carries out the reaction L-seryl-[protein] + ATP = O-phospho-L-seryl-[protein] + ADP + H(+). The catalysed reaction is L-threonyl-[protein] + ATP = O-phospho-L-threonyl-[protein] + ADP + H(+). Functionally, probable serine/threonine-protein kinase. This chain is Serine/threonine-protein kinase 4 homolog B (krsB), found in Dictyostelium discoideum (Social amoeba).